The following is a 400-amino-acid chain: MKIETLPAEFEPARPILSRIEEAGFEAYFVGGCVRDTILNLPIHDIDIATSAYPAEIKQIFSRTVDTGIEHGTVMILDHGTGYETTTFRTESGYQDFRRPDSVTFVRSLKEDLQRRDFTINALALKEDGTVVDLFDGLGDLKRHLIKAVGDPAERFHEDALRMMRAARFAAKLGFQIEPGTLAGMSQNAALLEKIAVERIQVEFEKLLLGKAVQNGLAAMLDTKLYLHCPGLKEGGQGLQYLAQQPLTLNNATQAWGALAICLGLDKNQLRPFLKGWKLSNGLITAVSRAVPLVEKLTTKTAGASDLYQAGQQAVADAVVIANSLGGQVDPQAVQAAYQALPIKESGELALNGGDLIKAGVKPGPAMGKALTTLTKQVVEGQLANDYQTLLKAAGELLKA.

2 residues coordinate ATP: G32 and R35. 2 residues coordinate CTP: G32 and R35. D45 and D47 together coordinate Mg(2+). R116, D159, R162, R165, and R168 together coordinate ATP. 5 residues coordinate CTP: R116, D159, R162, R165, and R168.

Belongs to the tRNA nucleotidyltransferase/poly(A) polymerase family. Bacterial CCA-adding enzyme type 3 subfamily. In terms of assembly, homodimer. Mg(2+) is required as a cofactor.

It catalyses the reaction a tRNA precursor + 2 CTP + ATP = a tRNA with a 3' CCA end + 3 diphosphate. The enzyme catalyses a tRNA with a 3' CCA end + 2 CTP + ATP = a tRNA with a 3' CCACCA end + 3 diphosphate. In terms of biological role, catalyzes the addition and repair of the essential 3'-terminal CCA sequence in tRNAs without using a nucleic acid template. Adds these three nucleotides in the order of C, C, and A to the tRNA nucleotide-73, using CTP and ATP as substrates and producing inorganic pyrophosphate. tRNA 3'-terminal CCA addition is required both for tRNA processing and repair. Also involved in tRNA surveillance by mediating tandem CCA addition to generate a CCACCA at the 3' terminus of unstable tRNAs. While stable tRNAs receive only 3'-terminal CCA, unstable tRNAs are marked with CCACCA and rapidly degraded. The sequence is that of CCA-adding enzyme from Limosilactobacillus fermentum (strain NBRC 3956 / LMG 18251) (Lactobacillus fermentum).